A 282-amino-acid polypeptide reads, in one-letter code: Pantothenate synthetase (282 aa).

ATP is bound at residue 30-37 (MGFLHDGH). The active-site Proton donor is the H37. Q60 contacts (R)-pantoate. Q60 is a binding site for beta-alanine. Residue 146-149 (GQKD) participates in ATP binding. Position 152 (Q152) interacts with (R)-pantoate. Residues I175 and 183 to 186 (KSSR) contribute to the ATP site.

This sequence belongs to the pantothenate synthetase family. Homodimer.

Its subcellular location is the cytoplasm. It catalyses the reaction (R)-pantoate + beta-alanine + ATP = (R)-pantothenate + AMP + diphosphate + H(+). It functions in the pathway cofactor biosynthesis; (R)-pantothenate biosynthesis; (R)-pantothenate from (R)-pantoate and beta-alanine: step 1/1. In terms of biological role, catalyzes the condensation of pantoate with beta-alanine in an ATP-dependent reaction via a pantoyl-adenylate intermediate. The polypeptide is Pantothenate synthetase (Campylobacter jejuni subsp. doylei (strain ATCC BAA-1458 / RM4099 / 269.97)).